The sequence spans 611 residues: ATP-dependent zinc metalloprotease FtsH (611 aa).

Residue M1 is a topological domain, cytoplasmic. A helical transmembrane segment spans residues 2-22 (VKNLIFWLVITVVLMSIFQNF). The Extracellular segment spans residues 23–98 (NTNDVNNHKV…IGAIPEEPSL (76 aa)). Residues 99–119 (FISILISWFPMLLLIGVWIFF) form a helical membrane-spanning segment. Topologically, residues 120-611 (MRQMQMGGGK…KGWIETDTNK (492 aa)) are cytoplasmic. 192-199 (GPPGTGKT) is an ATP binding site. H414 provides a ligand contact to Zn(2+). Residue E415 is part of the active site. Zn(2+)-binding residues include H418 and D492.

The protein in the central section; belongs to the AAA ATPase family. It in the C-terminal section; belongs to the peptidase M41 family. As to quaternary structure, homohexamer. Zn(2+) serves as cofactor.

The protein localises to the cell membrane. Functionally, acts as a processive, ATP-dependent zinc metallopeptidase for both cytoplasmic and membrane proteins. Plays a role in the quality control of integral membrane proteins. The chain is ATP-dependent zinc metalloprotease FtsH from Buchnera aphidicola subsp. Acyrthosiphon pisum (strain APS) (Acyrthosiphon pisum symbiotic bacterium).